A 350-amino-acid chain; its full sequence is Ion-translocating oxidoreductase complex subunit D (350 aa).

Transmembrane regions (helical) follow at residues 25–45 (ALCL…GSLI), 89–109 (IPPL…IIIV), and 124–144 (AMAG…SWVA). The residue at position 185 (Thr-185) is an FMN phosphoryl threonine. Helical transmembrane passes span 212-232 (SYGV…LVLL), 239-259 (WHIS…GFLI), 265-285 (VSPL…FIAT), 298-318 (LIFG…GGYP), and 319-339 (DAVA…DHYV).

This sequence belongs to the NqrB/RnfD family. As to quaternary structure, the complex is composed of six subunits: RnfA, RnfB, RnfC, RnfD, RnfE and RnfG. It depends on FMN as a cofactor.

It localises to the cell inner membrane. Part of a membrane-bound complex that couples electron transfer with translocation of ions across the membrane. In Shewanella denitrificans (strain OS217 / ATCC BAA-1090 / DSM 15013), this protein is Ion-translocating oxidoreductase complex subunit D.